We begin with the raw amino-acid sequence, 921 residues long: Isoleucine--tRNA ligase 1 (921 aa).

The 'HIGH' region motif lies at 57-67 (PYANGDIHMGH). L-isoleucyl-5'-AMP is bound at residue glutamate 552. The 'KMSKS' region signature appears at 593–597 (KMSKS). Residue lysine 596 participates in ATP binding. Cysteine 888, cysteine 891, cysteine 908, and cysteine 911 together coordinate Zn(2+).

It belongs to the class-I aminoacyl-tRNA synthetase family. IleS type 1 subfamily. In terms of assembly, monomer. Zn(2+) is required as a cofactor.

It is found in the cytoplasm. The catalysed reaction is tRNA(Ile) + L-isoleucine + ATP = L-isoleucyl-tRNA(Ile) + AMP + diphosphate. Catalyzes the attachment of isoleucine to tRNA(Ile). As IleRS can inadvertently accommodate and process structurally similar amino acids such as valine, to avoid such errors it has two additional distinct tRNA(Ile)-dependent editing activities. One activity is designated as 'pretransfer' editing and involves the hydrolysis of activated Val-AMP. The other activity is designated 'posttransfer' editing and involves deacylation of mischarged Val-tRNA(Ile). This Bacillus thuringiensis subsp. konkukian (strain 97-27) protein is Isoleucine--tRNA ligase 1.